The following is a 340-amino-acid chain: Phosphatidylglycerol--prolipoprotein diacylglyceryl transferase (340 aa).

A run of 4 helical transmembrane segments spans residues 19 to 39 (IPLRGYAFCIIIGVFVAVWLG), 54 to 74 (ADIAVWAVPFGLVGGRLYHVI), 93 to 113 (IWEGGLGIWGAIALGAVGAWI), and 119 to 139 (GIPLPAWADAVAPGIAFAQAF). R141 provides a ligand contact to a 1,2-diacyl-sn-glycero-3-phospho-(1'-sn-glycerol). 3 helical membrane-spanning segments follow: residues 176-196 (HPTFLYESLWCVGVGFLVIWA), 202-221 (LGHGRAFALYVAAYCVGRAW), and 238-258 (LNDWTAIAVFLLAVLYIVLSS). The interval 266–340 (EIVEPGASDT…ESAAESAKKV (75 aa)) is disordered. A compositionally biased stretch (basic and acidic residues) spans 284–294 (DLGKDEDKATT). Residues 295 to 307 (DKATATDTSTTTD) show a composition bias toward low complexity. Basic and acidic residues predominate over residues 326–340 (PSEKTESAAESAKKV).

This sequence belongs to the Lgt family.

It is found in the cell membrane. The catalysed reaction is L-cysteinyl-[prolipoprotein] + a 1,2-diacyl-sn-glycero-3-phospho-(1'-sn-glycerol) = an S-1,2-diacyl-sn-glyceryl-L-cysteinyl-[prolipoprotein] + sn-glycerol 1-phosphate + H(+). The protein operates within protein modification; lipoprotein biosynthesis (diacylglyceryl transfer). In terms of biological role, catalyzes the transfer of the diacylglyceryl group from phosphatidylglycerol to the sulfhydryl group of the N-terminal cysteine of a prolipoprotein, the first step in the formation of mature lipoproteins. This Streptomyces avermitilis (strain ATCC 31267 / DSM 46492 / JCM 5070 / NBRC 14893 / NCIMB 12804 / NRRL 8165 / MA-4680) protein is Phosphatidylglycerol--prolipoprotein diacylglyceryl transferase.